A 535-amino-acid polypeptide reads, in one-letter code: T-complex protein 1 subunit zeta 2 (535 aa).

This sequence belongs to the TCP-1 chaperonin family. As to quaternary structure, heterooligomeric complex of about 850 to 900 kDa that forms two stacked rings, 12 to 16 nm in diameter.

The protein localises to the cytoplasm. Its function is as follows. Molecular chaperone; assists the folding of proteins upon ATP hydrolysis. Known to play a role, in vitro, in the folding of actin and tubulin. The chain is T-complex protein 1 subunit zeta 2 from Arabidopsis thaliana (Mouse-ear cress).